The following is a 90-amino-acid chain: Small ribosomal subunit protein uS17m (90 aa).

This sequence belongs to the universal ribosomal protein uS17 family. As to quaternary structure, component of the mitochondrial small ribosomal subunit (mt-SSU). Mature yeast 74S mitochondrial ribosomes consist of a small (37S) and a large (54S) subunit. The 37S small subunit contains a 15S ribosomal RNA (15S mt-rRNA) and at least 32 different proteins. The 54S large subunit contains a 21S rRNA (21S mt-rRNA) and at least 45 different proteins.

It is found in the mitochondrion. Functionally, component of the mitochondrial ribosome (mitoribosome), a dedicated translation machinery responsible for the synthesis of mitochondrial genome-encoded proteins, including at least some of the essential transmembrane subunits of the mitochondrial respiratory chain. The mitoribosomes are attached to the mitochondrial inner membrane and translation products are cotranslationally integrated into the membrane. uS17m may have a meiosis-specific role as it accumulates during the middle stage of sporulation. This Schizosaccharomyces pombe (strain 972 / ATCC 24843) (Fission yeast) protein is Small ribosomal subunit protein uS17m.